A 126-amino-acid polypeptide reads, in one-letter code: Glycine cleavage system H protein (126 aa).

One can recognise a Lipoyl-binding domain in the interval 22–104 (VAYVGITDYA…YGEGWLIKMK (83 aa)). An N6-lipoyllysine modification is found at K63.

This sequence belongs to the GcvH family. In terms of assembly, the glycine cleavage system is composed of four proteins: P, T, L and H. The cofactor is (R)-lipoate.

Functionally, the glycine cleavage system catalyzes the degradation of glycine. The H protein shuttles the methylamine group of glycine from the P protein to the T protein. The protein is Glycine cleavage system H protein of Bacteroides fragilis (strain ATCC 25285 / DSM 2151 / CCUG 4856 / JCM 11019 / LMG 10263 / NCTC 9343 / Onslow / VPI 2553 / EN-2).